A 351-amino-acid chain; its full sequence is Ribonucleoside-diphosphate reductase subunit M2 B (351 aa).

Residues Met1–Glu31 form a disordered region. Fe cation-binding residues include Asp100, Glu131, and His134. Tyr138 is an active-site residue. 3 residues coordinate Fe cation: Glu194, Glu228, and His231.

It belongs to the ribonucleoside diphosphate reductase small chain family. As to quaternary structure, heterotetramer with large (RRM1) subunit. Interacts with p53/TP53. Interacts with RRM1 in response to DNA damage. Fe cation is required as a cofactor.

Its subcellular location is the cytoplasm. The protein resides in the nucleus. The enzyme catalyses a 2'-deoxyribonucleoside 5'-diphosphate + [thioredoxin]-disulfide + H2O = a ribonucleoside 5'-diphosphate + [thioredoxin]-dithiol. Plays a pivotal role in cell survival by repairing damaged DNA in a p53/TP53-dependent manner. Supplies deoxyribonucleotides for DNA repair in cells arrested at G1 or G2. Contains an iron-tyrosyl free radical center required for catalysis. Forms an active ribonucleotide reductase (RNR) complex with RRM1 which is expressed both in resting and proliferating cells in response to DNA damage. The chain is Ribonucleoside-diphosphate reductase subunit M2 B (RRM2B) from Pongo abelii (Sumatran orangutan).